The following is a 199-amino-acid chain: NAD(P)H dehydrogenase (quinone) (199 aa).

Residues 4–190 (ILVLYYSMYG…AIARFQGEHV (187 aa)) enclose the Flavodoxin-like domain. FMN is bound by residues 10–15 (SMYGHI) and 79–81 (TRF). Residue Y12 coordinates NAD(+). W99 contacts substrate. FMN contacts are provided by residues 114–119 (STGTGG) and H134.

Belongs to the WrbA family. It depends on FMN as a cofactor.

The catalysed reaction is a quinone + NADH + H(+) = a quinol + NAD(+). The enzyme catalyses a quinone + NADPH + H(+) = a quinol + NADP(+). The polypeptide is NAD(P)H dehydrogenase (quinone) (Yersinia pseudotuberculosis serotype O:1b (strain IP 31758)).